Consider the following 461-residue polypeptide: Kynurenine 3-monooxygenase (461 aa).

Helical transmembrane passes span 395 to 415 (TIMNSIFPKSWIPLYSMVTFS) and 432 to 452 (ILSRIMTTTSTLALIGAAAGI).

It belongs to the aromatic-ring hydroxylase family. KMO subfamily. FAD serves as cofactor.

It localises to the mitochondrion. It is found in the membrane. It carries out the reaction L-kynurenine + NADPH + O2 + H(+) = 3-hydroxy-L-kynurenine + NADP(+) + H2O. It participates in cofactor biosynthesis; NAD(+) biosynthesis; quinolinate from L-kynurenine: step 1/3. Catalyzes the hydroxylation of L-kynurenine (L-Kyn) to form 3-hydroxy-L-kynurenine (L-3OHKyn). Required for synthesis of quinolinic acid. The polypeptide is Kynurenine 3-monooxygenase (Caenorhabditis elegans).